We begin with the raw amino-acid sequence, 727 residues long: Engulfment and cell motility protein 1 (727 aa).

Tyr18 is subject to Phosphotyrosine; by HCK. 2 positions are modified to N6-acetyllysine: Lys100 and Lys105. Tyr216 is subject to Phosphotyrosine; by HCK. An ELMO domain is found at 319 to 492; that stretch reads AQRDIIFELR…VVKEQVMRAL (174 aa). A Phosphoserine modification is found at Ser344. Phosphotyrosine; by HCK is present on residues Tyr395 and Tyr511. One can recognise a PH domain in the interval 555–676; sequence RLVEGTCFRK…DGLNALLGKD (122 aa). The short motif at 707–714 is the SH3-binding element; that stretch reads PDAPPPIP. Tyr720 bears the Phosphotyrosine; by HCK mark.

As to quaternary structure, interacts with ADGRB1. Interacts directly with the SH3-domain of DOCK1 via its SH3-binding site. Part of a complex with DOCK1 and RAC1. Part of a complex with DOCK1 and CRK isoform CRK-II. Interacts with PLEKHG6. Interacts with HCK (via SH3 domain). Interacts with ADGRB3. Interacts with DOCK5. In terms of processing, phosphorylated by HCK. As to expression, widely expressed, with a higher expression in the spleen and placenta.

The protein resides in the cytoplasm. It is found in the cell membrane. Functionally, involved in cytoskeletal rearrangements required for phagocytosis of apoptotic cells and cell motility. Acts in association with DOCK1 and CRK. Was initially proposed to be required in complex with DOCK1 to activate Rac Rho small GTPases. May enhance the guanine nucleotide exchange factor (GEF) activity of DOCK1. This is Engulfment and cell motility protein 1 (ELMO1) from Homo sapiens (Human).